A 285-amino-acid polypeptide reads, in one-letter code: Probable endonuclease 4 (285 aa).

Positions 69, 109, 145, 179, 182, 216, 229, 231, and 261 each coordinate Zn(2+).

This sequence belongs to the AP endonuclease 2 family. It depends on Zn(2+) as a cofactor.

The catalysed reaction is Endonucleolytic cleavage to 5'-phosphooligonucleotide end-products.. Endonuclease IV plays a role in DNA repair. It cleaves phosphodiester bonds at apurinic or apyrimidinic (AP) sites, generating a 3'-hydroxyl group and a 5'-terminal sugar phosphate. This is Probable endonuclease 4 from Cronobacter sakazakii (strain ATCC BAA-894) (Enterobacter sakazakii).